The primary structure comprises 131 residues: Small ribosomal subunit protein uS8 (131 aa).

The protein belongs to the universal ribosomal protein uS8 family. In terms of assembly, part of the 30S ribosomal subunit. Contacts proteins S5 and S12.

Functionally, one of the primary rRNA binding proteins, it binds directly to 16S rRNA central domain where it helps coordinate assembly of the platform of the 30S subunit. This Methylococcus capsulatus (strain ATCC 33009 / NCIMB 11132 / Bath) protein is Small ribosomal subunit protein uS8.